The primary structure comprises 459 residues: UDP-N-acetylmuramoylalanine--D-glutamate ligase (459 aa).

118-124 (GTNGKTT) is an ATP binding site.

This sequence belongs to the MurCDEF family.

Its subcellular location is the cytoplasm. It catalyses the reaction UDP-N-acetyl-alpha-D-muramoyl-L-alanine + D-glutamate + ATP = UDP-N-acetyl-alpha-D-muramoyl-L-alanyl-D-glutamate + ADP + phosphate + H(+). The protein operates within cell wall biogenesis; peptidoglycan biosynthesis. Its function is as follows. Cell wall formation. Catalyzes the addition of glutamate to the nucleotide precursor UDP-N-acetylmuramoyl-L-alanine (UMA). This Desulfosudis oleivorans (strain DSM 6200 / JCM 39069 / Hxd3) (Desulfococcus oleovorans) protein is UDP-N-acetylmuramoylalanine--D-glutamate ligase.